The sequence spans 254 residues: Ribosomal RNA small subunit methyltransferase A (254 aa).

6 residues coordinate S-adenosyl-L-methionine: asparagine 12, leucine 14, glycine 38, glutamate 59, aspartate 83, and asparagine 100.

Belongs to the class I-like SAM-binding methyltransferase superfamily. rRNA adenine N(6)-methyltransferase family. RsmA subfamily.

Its subcellular location is the cytoplasm. It catalyses the reaction adenosine(1518)/adenosine(1519) in 16S rRNA + 4 S-adenosyl-L-methionine = N(6)-dimethyladenosine(1518)/N(6)-dimethyladenosine(1519) in 16S rRNA + 4 S-adenosyl-L-homocysteine + 4 H(+). Its function is as follows. Specifically dimethylates two adjacent adenosines (A1518 and A1519) in the loop of a conserved hairpin near the 3'-end of 16S rRNA in the 30S particle. May play a critical role in biogenesis of 30S subunits. This is Ribosomal RNA small subunit methyltransferase A from Mycoplasma mobile (strain ATCC 43663 / 163K / NCTC 11711) (Mesomycoplasma mobile).